Reading from the N-terminus, the 156-residue chain is Phosphopantetheine adenylyltransferase (156 aa).

Thr10 lines the substrate pocket. Residues Thr10–Phe11 and His18 contribute to the ATP site. Positions 42, 74, and 88 each coordinate substrate. ATP contacts are provided by residues Gly89–Arg91, Glu99, and Trp124–Ser130.

The protein belongs to the bacterial CoaD family. As to quaternary structure, homohexamer. Requires Mg(2+) as cofactor.

The protein localises to the cytoplasm. The enzyme catalyses (R)-4'-phosphopantetheine + ATP + H(+) = 3'-dephospho-CoA + diphosphate. It participates in cofactor biosynthesis; coenzyme A biosynthesis; CoA from (R)-pantothenate: step 4/5. Functionally, reversibly transfers an adenylyl group from ATP to 4'-phosphopantetheine, yielding dephospho-CoA (dPCoA) and pyrophosphate. This is Phosphopantetheine adenylyltransferase from Hamiltonella defensa subsp. Acyrthosiphon pisum (strain 5AT).